A 200-amino-acid chain; its full sequence is Probable molybdenum cofactor guanylyltransferase (200 aa).

GTP is bound by residues 9–11 (LAG), Lys-21, Asp-69, and Asp-100. A Mg(2+)-binding site is contributed by Asp-100.

It belongs to the MobA family. Mg(2+) serves as cofactor.

The protein resides in the cytoplasm. The enzyme catalyses Mo-molybdopterin + GTP + H(+) = Mo-molybdopterin guanine dinucleotide + diphosphate. Its function is as follows. Transfers a GMP moiety from GTP to Mo-molybdopterin (Mo-MPT) cofactor (Moco or molybdenum cofactor) to form Mo-molybdopterin guanine dinucleotide (Mo-MGD) cofactor. This Bacillus cereus (strain AH820) protein is Probable molybdenum cofactor guanylyltransferase.